Here is a 243-residue protein sequence, read N- to C-terminus: UPF0173 metal-dependent hydrolase Xaut_3786 (243 aa).

Belongs to the UPF0173 family.

The chain is UPF0173 metal-dependent hydrolase Xaut_3786 from Xanthobacter autotrophicus (strain ATCC BAA-1158 / Py2).